We begin with the raw amino-acid sequence, 379 residues long: Homoserine O-succinyltransferase (379 aa).

Residues 48 to 357 enclose the AB hydrolase-1 domain; it reads NAVLICHALS…SAHGHDAFLM (310 aa). The active-site Nucleophile is Ser-154. Arg-224 is a substrate binding site. Active-site residues include Asp-319 and His-352. Asp-353 contacts substrate.

Belongs to the AB hydrolase superfamily. MetX family. As to quaternary structure, homodimer.

It localises to the cytoplasm. It carries out the reaction L-homoserine + succinyl-CoA = O-succinyl-L-homoserine + CoA. It functions in the pathway amino-acid biosynthesis; L-methionine biosynthesis via de novo pathway; O-succinyl-L-homoserine from L-homoserine: step 1/1. Transfers a succinyl group from succinyl-CoA to L-homoserine, forming succinyl-L-homoserine. The protein is Homoserine O-succinyltransferase of Neisseria gonorrhoeae (strain ATCC 700825 / FA 1090).